Reading from the N-terminus, the 319-residue chain is Glutathione synthetase (319 aa).

One can recognise an ATP-grasp domain in the interval E125–E311. Position 151–208 (F151–G208) interacts with ATP. Residues E282 and N284 each contribute to the Mg(2+) site.

It belongs to the prokaryotic GSH synthase family. The cofactor is Mg(2+). Mn(2+) is required as a cofactor.

It catalyses the reaction gamma-L-glutamyl-L-cysteine + glycine + ATP = glutathione + ADP + phosphate + H(+). It functions in the pathway sulfur metabolism; glutathione biosynthesis; glutathione from L-cysteine and L-glutamate: step 2/2. The protein is Glutathione synthetase of Pseudomonas syringae pv. tomato (strain ATCC BAA-871 / DC3000).